The primary structure comprises 89 residues: Small ribosomal subunit protein uS17A (89 aa).

Belongs to the universal ribosomal protein uS17 family. In terms of assembly, part of the 30S ribosomal subunit.

Its function is as follows. One of the primary rRNA binding proteins, it binds specifically to the 5'-end of 16S ribosomal RNA. The protein is Small ribosomal subunit protein uS17A of Bacteroides thetaiotaomicron (strain ATCC 29148 / DSM 2079 / JCM 5827 / CCUG 10774 / NCTC 10582 / VPI-5482 / E50).